The following is a 172-amino-acid chain: Ribosome maturation factor RimM (172 aa).

One can recognise a PRC barrel domain in the interval 96 to 168; that stretch reads DGEFYYHEII…RVQVELMEGL (73 aa).

The protein belongs to the RimM family. In terms of assembly, binds ribosomal protein uS19.

Its subcellular location is the cytoplasm. In terms of biological role, an accessory protein needed during the final step in the assembly of 30S ribosomal subunit, possibly for assembly of the head region. Essential for efficient processing of 16S rRNA. May be needed both before and after RbfA during the maturation of 16S rRNA. It has affinity for free ribosomal 30S subunits but not for 70S ribosomes. The sequence is that of Ribosome maturation factor RimM from Streptococcus agalactiae serotype III (strain NEM316).